The primary structure comprises 106 residues: ATP-dependent Clp protease adapter protein ClpS (106 aa).

This sequence belongs to the ClpS family. Binds to the N-terminal domain of the chaperone ClpA.

Involved in the modulation of the specificity of the ClpAP-mediated ATP-dependent protein degradation. In Citrobacter koseri (strain ATCC BAA-895 / CDC 4225-83 / SGSC4696), this protein is ATP-dependent Clp protease adapter protein ClpS.